A 491-amino-acid chain; its full sequence is Alpha-2-antiplasmin (491 aa).

A signal peptide spans 1 to 27; the sequence is MALLRGLLVLSLSCLQGPCFTFSPVSA. Residues 28–39 constitute a propeptide that is removed on maturation; sequence VDLPGQQPVSEQ. A disulfide bridge links Cys-70 with Cys-143. Residues Asn-126, Asn-295, Asn-309, and Asn-316 are each glycosylated (N-linked (GlcNAc...) asparagine). The disordered stretch occupies residues 439-491; that stretch reads SALPQLQEQRDSPDNRLIGQNDKADFHGGKTFGPDLKLAPRMEEDYPQFSSPK. Tyr-484 carries the post-translational modification Sulfotyrosine.

Belongs to the serpin family. As to quaternary structure, forms protease inhibiting heterodimer with TMPRSS7. Proteolytically cleaved at Pro-35 by both the prolyl endopeptidase FAP form and antiplasmin-cleaving enzyme FAP soluble form to generate mature alpha-2-antiplasmin. As to expression, expressed by the liver and secreted in plasma.

It is found in the secreted. Functionally, serine protease inhibitor. The major targets of this inhibitor are plasmin and trypsin, but it also inactivates matriptase-3/TMPRSS7 and chymotrypsin. This chain is Alpha-2-antiplasmin (Serpinf2), found in Mus musculus (Mouse).